The chain runs to 182 residues: LPS-assembly lipoprotein LptE (182 aa).

The signal sequence occupies residues 1-19 (MRHRILTLLLGLAVLVTAG). Residue C20 is the site of N-palmitoyl cysteine attachment. Residue C20 is the site of S-diacylglycerol cysteine attachment.

The protein belongs to the LptE lipoprotein family. Component of the lipopolysaccharide transport and assembly complex. Interacts with LptD.

Its subcellular location is the cell outer membrane. Its function is as follows. Together with LptD, is involved in the assembly of lipopolysaccharide (LPS) at the surface of the outer membrane. Required for the proper assembly of LptD. Binds LPS and may serve as the LPS recognition site at the outer membrane. The chain is LPS-assembly lipoprotein LptE from Photorhabdus laumondii subsp. laumondii (strain DSM 15139 / CIP 105565 / TT01) (Photorhabdus luminescens subsp. laumondii).